The sequence spans 554 residues: ATP-dependent RNA helicase MRH4, mitochondrial (554 aa).

The N-terminal 54 residues, 1–54 (MSSVGIASASLWLRGPVKSALKGRWLSCEQMRRYGTKSAPAVRKGGHSKKARQA), are a transit peptide targeting the mitochondrion. Residues 119–140 (DCGLDDKRVAAFLGQVQPTPIQ) carry the Q motif motif. Residues 150–337 (TLMEPQLQVH…NKLFPNLQVV (188 aa)) form the Helicase ATP-binding domain. 163 to 170 (AETGSGKT) is a binding site for ATP. The DEAD box signature appears at 285–288 (DEAD). Positions 368–554 (ALAQALYAIM…PVVKKNRPIQ (187 aa)) constitute a Helicase C-terminal domain. A disordered region spans residues 439–474 (RIQDQVRPSELKKPQERRLPNSNIKVADSKDNGQRS). Basic and acidic residues predominate over residues 445 to 457 (RPSELKKPQERRL).

This sequence belongs to the DEAD box helicase family. MRH4 subfamily.

It localises to the mitochondrion. It carries out the reaction ATP + H2O = ADP + phosphate + H(+). In terms of biological role, ATP-binding RNA helicase involved in mitochondrial RNA metabolism. Required for maintenance of mitochondrial DNA. This chain is ATP-dependent RNA helicase MRH4, mitochondrial (MRH4), found in Eremothecium gossypii (strain ATCC 10895 / CBS 109.51 / FGSC 9923 / NRRL Y-1056) (Yeast).